A 637-amino-acid chain; its full sequence is ATP-dependent zinc metalloprotease FtsH (637 aa).

The Cytoplasmic segment spans residues 1–44; it reads MAKHSQHSSPPRKLFDTLNDLWQRAKSEAGLSAEGPEGTRRRNN. A helical membrane pass occupies residues 45 to 65; it reads LILYLLLVLSTLYLLNGYQTL. The Periplasmic segment spans residues 66-141; that stretch reads RNEEIPYSEF…TVRYGSNWFS (76 aa). Residues 142 to 162 traverse the membrane as a helical segment; sequence SLIFNWIVPIVLLTLFWTWMA. At 163–637 the chain is on the cytoplasmic side; sequence RRMTGGRGFL…VKAVIREAAS (475 aa). Residue 231-238 coordinates ATP; the sequence is GPPGTGKT. Position 454 (His454) interacts with Zn(2+). The active site involves Glu455. Residues His458 and Asp531 each contribute to the Zn(2+) site.

It in the central section; belongs to the AAA ATPase family. The protein in the C-terminal section; belongs to the peptidase M41 family. In terms of assembly, homohexamer. The cofactor is Zn(2+).

The protein localises to the cell inner membrane. In terms of biological role, acts as a processive, ATP-dependent zinc metallopeptidase for both cytoplasmic and membrane proteins. Plays a role in the quality control of integral membrane proteins. The protein is ATP-dependent zinc metalloprotease FtsH of Methylococcus capsulatus (strain ATCC 33009 / NCIMB 11132 / Bath).